Here is a 547-residue protein sequence, read N- to C-terminus: CTP synthase (547 aa).

The tract at residues 1-273 (MNNKKLKSKF…DHFILNHFQL (273 aa)) is amidoligase domain. Position 19 (Ser19) interacts with CTP. Ser19 lines the UTP pocket. 20 to 25 (SLGKGI) serves as a coordination point for ATP. Position 60 (Tyr60) interacts with L-glutamine. Asp77 serves as a coordination point for ATP. The Mg(2+) site is built by Asp77 and Glu147. Residues 154 to 156 (DIE), 194 to 199 (KTKPTQ), and Lys230 each bind CTP. UTP contacts are provided by residues 194-199 (KTKPTQ) and Lys230. The region spanning 306–539 (YVILHDAYLS…VEAALLKNGK (234 aa)) is the Glutamine amidotransferase type-1 domain. L-glutamine is bound at residue Gly361. The Nucleophile; for glutamine hydrolysis role is filled by Cys388. Residues 389 to 392 (FGMQ), Glu412, and Arg466 contribute to the L-glutamine site. Active-site residues include His512 and Glu514.

Belongs to the CTP synthase family. As to quaternary structure, homotetramer.

The enzyme catalyses UTP + L-glutamine + ATP + H2O = CTP + L-glutamate + ADP + phosphate + 2 H(+). The catalysed reaction is L-glutamine + H2O = L-glutamate + NH4(+). It carries out the reaction UTP + NH4(+) + ATP = CTP + ADP + phosphate + 2 H(+). It participates in pyrimidine metabolism; CTP biosynthesis via de novo pathway; CTP from UDP: step 2/2. Its activity is regulated as follows. Allosterically activated by GTP, when glutamine is the substrate; GTP has no effect on the reaction when ammonia is the substrate. The allosteric effector GTP functions by stabilizing the protein conformation that binds the tetrahedral intermediate(s) formed during glutamine hydrolysis. Inhibited by the product CTP, via allosteric rather than competitive inhibition. In terms of biological role, catalyzes the ATP-dependent amination of UTP to CTP with either L-glutamine or ammonia as the source of nitrogen. Regulates intracellular CTP levels through interactions with the four ribonucleotide triphosphates. The chain is CTP synthase from Phytoplasma australiense.